The primary structure comprises 456 residues: MSAQTGTDLFKIADLFAYQVFDSRGFPTVACVVKLASGHTGEAMVPSGASTGEKEAIELRDGDPKAYFGKGVSQAVQNVNQTIAPKLIGLNATDQAAIDALMIQLDGTPNKAKLGANAILAVSLAVAKAAASAQKTSLFKYLANQVMGLNKTEFILTVPMLNVINGGAHADNNIDFQEFMIMPLGANSMHQALKMASETFHALQKLLKQRGLNTNKGDEGGFAPNLKLAEEALDLMVEAIKAAGYQPGSDIAIALDVAASEFYDDTTKRYVFKKGIKAKILDEKEWSLTTAQMIAYLKKLTEQYPIISIEDGLSEHDWEGMETLTKTLGQHIQIVGDDLYCTNPAIAEKGVAHKATNSILIKLNQIGTLTETIKAINIAKDANWSQVISHRSGETEDTTIADLAVAACTGQIKTGSMSRSERIAKYNRLLQIELELGNNAKYLGWNTFKNIKPQKA.

Q177 contacts (2R)-2-phosphoglycerate. E219 (proton donor) is an active-site residue. Mg(2+) contacts are provided by D256, E310, and D337. (2R)-2-phosphoglycerate is bound by residues K362, R391, S392, and K413. K362 acts as the Proton acceptor in catalysis.

The protein belongs to the enolase family. In terms of assembly, homodimer. It depends on Mg(2+) as a cofactor.

It localises to the cytoplasm. Its subcellular location is the secreted. The protein localises to the cell surface. The enzyme catalyses (2R)-2-phosphoglycerate = phosphoenolpyruvate + H2O. The protein operates within carbohydrate degradation; glycolysis; pyruvate from D-glyceraldehyde 3-phosphate: step 4/5. Its function is as follows. Catalyzes the reversible conversion of 2-phosphoglycerate (2-PG) into phosphoenolpyruvate (PEP). It is essential for the degradation of carbohydrates via glycolysis. Functionally, 'Moonlights' as a plasminogen receptor. Binds plasminogen, but no fibronectin binding was observed. Plasminogen binding increases bacterial adherence to host cells; plasmin activity leads to degradation of host extracellular matrix proteins, facilitating bacterial dissemination and disease spread. The polypeptide is Enolase (Mycoplasma pneumoniae (strain ATCC 29342 / M129 / Subtype 1) (Mycoplasmoides pneumoniae)).